Here is a 491-residue protein sequence, read N- to C-terminus: MTVHFPFQNSYVALPDNFFARVAPTPVAAPRLIKLNRPLAEELGLNPAELETPEGAEILAGKTVPEGAEPIAMAYAGHQFGHFVPQLGDGRAVLLGEVVDRNGVRRDIQLKGSGPTPFSRRGDGRAALGPVLREYIVSEAMAALGIPTTRSLAAVVTGEQVYRGTALPGAVLTRVATSHIRVGTFQYFAARQDVEAVRRLADHVIGRHYPDLAGTERPYHALLAAVISRQAKLIADWLLVGFIHGVMNTDNTSVSGETIDYGPCAFMDAYDPKQVFSSIDEFGRYAFANQPRIAMWNLTRLAECLLPLFGDDKDQAIKEAETALDGFAAQFTEAHQAGLRRKLGLFTQRDGDQPLAQALFDAMALAKADFTLTFRRLSDAAGSGDLSVVRALFEDPTGFDEWAARWQQRLAVEPQTPAERRAAMRKVNPAFIPRNHRIEAVITAAVENDDYAPFEELHAVLAKPYDDQPDRADYAEPPQPEERVLQTFCGT.

ATP contacts are provided by G88, G90, R91, K111, D123, G124, R174, and R181. The active-site Proton acceptor is D250. Mg(2+) contacts are provided by N251 and D260. D260 serves as a coordination point for ATP. Over residues 466 to 484 the composition is skewed to basic and acidic residues; sequence DDQPDRADYAEPPQPEERV. Positions 466–491 are disordered; that stretch reads DDQPDRADYAEPPQPEERVLQTFCGT.

Belongs to the SELO family. The cofactor is Mg(2+). Mn(2+) is required as a cofactor.

The enzyme catalyses L-seryl-[protein] + ATP = 3-O-(5'-adenylyl)-L-seryl-[protein] + diphosphate. It carries out the reaction L-threonyl-[protein] + ATP = 3-O-(5'-adenylyl)-L-threonyl-[protein] + diphosphate. The catalysed reaction is L-tyrosyl-[protein] + ATP = O-(5'-adenylyl)-L-tyrosyl-[protein] + diphosphate. It catalyses the reaction L-histidyl-[protein] + UTP = N(tele)-(5'-uridylyl)-L-histidyl-[protein] + diphosphate. The enzyme catalyses L-seryl-[protein] + UTP = O-(5'-uridylyl)-L-seryl-[protein] + diphosphate. It carries out the reaction L-tyrosyl-[protein] + UTP = O-(5'-uridylyl)-L-tyrosyl-[protein] + diphosphate. Functionally, nucleotidyltransferase involved in the post-translational modification of proteins. It can catalyze the addition of adenosine monophosphate (AMP) or uridine monophosphate (UMP) to a protein, resulting in modifications known as AMPylation and UMPylation. In Bradyrhizobium sp. (strain ORS 278), this protein is Protein nucleotidyltransferase YdiU.